Reading from the N-terminus, the 214-residue chain is Cytochrome b (214 aa).

Helical transmembrane passes span 31 to 51, 75 to 96, 111 to 131, and 176 to 196; these read FGSMLLTCLVIQIMTGFFLAF, WIMQNTHAIGASLFFICIYIHI, WVSGTTLLILLMATAFFGYVL, and FFALHFILPFTIISASSIHIL. Heme b contacts are provided by H81 and H95. Heme b contacts are provided by H180 and H194. H199 serves as a coordination point for a ubiquinone.

It belongs to the cytochrome b family. As to quaternary structure, the cytochrome bc1 complex contains 3 respiratory subunits (MT-CYB, CYC1 and UQCRFS1), 2 core proteins (UQCRC1 and UQCRC2) and probably 6 low-molecular weight proteins. Heme b is required as a cofactor.

Its subcellular location is the mitochondrion inner membrane. Functionally, component of the ubiquinol-cytochrome c reductase complex (complex III or cytochrome b-c1 complex) that is part of the mitochondrial respiratory chain. The b-c1 complex mediates electron transfer from ubiquinol to cytochrome c. Contributes to the generation of a proton gradient across the mitochondrial membrane that is then used for ATP synthesis. In Gloydius blomhoffii (Mamushi), this protein is Cytochrome b (MT-CYB).